Reading from the N-terminus, the 378-residue chain is Transmembrane 6 superfamily member 2 (378 aa).

10 consecutive transmembrane segments (helical) span residues 10–30, 34–54, 63–83, 110–130, 140–160, 170–190, 219–239, 269–289, 291–311, and 332–352; these read TVAM…VSAF, LFVV…VYSL, PLYA…VIAL, IFIC…MAGA, LGLY…PGNI, PTFF…VRIF, LALI…GLVV, MLMY…ALAF, GCSW…QAQF, and TWAT…LLAF. EXPERA domains are found at residues 61 to 186 and 217 to 351; these read YDPL…CWAG and ADLA…HLLA.

It belongs to the TM6SF family. Highly expressed in the liver at both the mRNA and protein levels.

Its subcellular location is the endoplasmic reticulum membrane. It localises to the endoplasmic reticulum-Golgi intermediate compartment membrane. Regulator of liver fat metabolism influencing triglyceride secretion and hepatic lipid droplet content. May function as sterol isomerase. The protein is Transmembrane 6 superfamily member 2 (Tm6sf2) of Mus musculus (Mouse).